A 133-amino-acid polypeptide reads, in one-letter code: Probable non-specific lipid-transfer protein 2 (133 aa).

The N-terminal stretch at 1-31 (MRTVSMAALVVIAAALAWTSSAEPAPAPAPG) is a signal peptide. Disulfide bonds link Cys-35–Cys-83, Cys-45–Cys-60, Cys-61–Cys-106, and Cys-81–Cys-121.

The protein belongs to the plant LTP family.

In terms of biological role, plant non-specific lipid-transfer proteins transfer phospholipids as well as galactolipids across membranes. May play a role in wax or cutin deposition in the cell walls of expanding epidermal cells and certain secretory tissues. This chain is Probable non-specific lipid-transfer protein 2, found in Parietaria judaica (Pellitory-of-the-wall).